The chain runs to 697 residues: MVAFGKYLQRKQIEEWSGYYINYKLMKKKVKQYAEQIQGGSQHPRHVLKDFSRMLDTQIETTVLFMLEQQGLLSGRLAKLRESHDAILEQPDISRIFELREAYRDVGRDLLQLLKFVELNAIGLRKILKKFDKRFGYRFADYYVKTRANHPYSQLQQVFKHVGVGAVVGAISRNLHELQENEGSFYSIYDQPVLPAQDPVVEAINNAVDKLTFSTNFLNFLAQHALIMQDDLVTPSEDTIDERSYHFNSLLLNLGNTFLYMVNTYIIVPTADDYSMSLGAAATVCGVVIGSMAVAQVFSSVYFSAWSNKSYFKPLVFSSIALFIGNLMYALAYDANSIALLLLGRVCCGLGSARAVNRRYISDCVPLRIRMQASAGFVSASALGMACGPALAGLLQIKFKFYKFTFNQSTLPGWVMAVAWLFYLVWLCISFREPLRDTEDGEKNNRNETTSDRVESSRVEEGLRLPLLITSGIKPEDEEECDESEESPEDSHKPANSFIEAYRLLTPSVKVQLLIYFMLKYSMEILLSESSVITSYYFSWTTSSVAIFLACLGLTVLPINILVGSYISNMFEDRQILLTSEIIVFLGILFSFNLFVPYTVPQYVISGLIMFVAAEVLEGVNLSLLSRVMSSRLSKGTYNGGLLSTEAGTLARVVADATITLGGYLGRGHLLNATLLPSLVICIGSIVATCCTYNSLY.

Positions V2–K145 constitute an SPX domain. The next 6 helical transmembrane spans lie at F247–I267, L278–F298, L315–A335, S337–V356, A375–L395, and L411–F431. Positions E439–V459 are disordered. Helical transmembrane passes span L513 to I533, S544 to G564, I576 to V596, V604 to L624, and L670 to C690.

Belongs to the major facilitator superfamily.

Its subcellular location is the membrane. This is SPX domain-containing membrane protein At1g63010 from Arabidopsis thaliana (Mouse-ear cress).